A 907-amino-acid polypeptide reads, in one-letter code: Protein translocase subunit SecA (907 aa).

Residues Gln87, 105–109, and Asp510 each bind ATP; that span reads GEGKT. The Zn(2+) site is built by Cys892, Cys894, Cys903, and His904.

The protein belongs to the SecA family. As to quaternary structure, monomer and homodimer. Part of the essential Sec protein translocation apparatus which comprises SecA, SecYEG and auxiliary proteins SecDF-YajC and YidC. Requires Zn(2+) as cofactor.

The protein resides in the cell inner membrane. It is found in the cytoplasm. It carries out the reaction ATP + H2O + cellular proteinSide 1 = ADP + phosphate + cellular proteinSide 2.. Part of the Sec protein translocase complex. Interacts with the SecYEG preprotein conducting channel. Has a central role in coupling the hydrolysis of ATP to the transfer of proteins into and across the cell membrane, serving both as a receptor for the preprotein-SecB complex and as an ATP-driven molecular motor driving the stepwise translocation of polypeptide chains across the membrane. In Acinetobacter baumannii (strain ATCC 17978 / DSM 105126 / CIP 53.77 / LMG 1025 / NCDC KC755 / 5377), this protein is Protein translocase subunit SecA.